The chain runs to 186 residues: MDKEHLKKNLQEKMEKALKVLDHELKGLRTGRASVNLLDSVTVEAYGSKMPLSQVASLSTPDARTINVQVWDKSMVSSVEKGITIANLGLTPATDGQLIRLPIPALTEERRTALVKLAHKYGEDTKISLRNIRRDGNEALKKLEKDNVIAKDEHHSLSEQVQKLTDDYSSKVDSVIKQKEQEIMTV.

Belongs to the RRF family.

It is found in the cytoplasm. In terms of biological role, responsible for the release of ribosomes from messenger RNA at the termination of protein biosynthesis. May increase the efficiency of translation by recycling ribosomes from one round of translation to another. The chain is Ribosome-recycling factor from Rickettsia conorii (strain ATCC VR-613 / Malish 7).